The following is a 292-amino-acid chain: ATP synthase gamma chain (292 aa).

This sequence belongs to the ATPase gamma chain family. In terms of assembly, F-type ATPases have 2 components, CF(1) - the catalytic core - and CF(0) - the membrane proton channel. CF(1) has five subunits: alpha(3), beta(3), gamma(1), delta(1), epsilon(1). CF(0) has three main subunits: a, b and c.

The protein resides in the cell inner membrane. Its function is as follows. Produces ATP from ADP in the presence of a proton gradient across the membrane. The gamma chain is believed to be important in regulating ATPase activity and the flow of protons through the CF(0) complex. The protein is ATP synthase gamma chain of Syntrophobacter fumaroxidans (strain DSM 10017 / MPOB).